A 639-amino-acid polypeptide reads, in one-letter code: 3D-(3,5/4)-trihydroxycyclohexane-1,2-dione hydrolase (639 aa).

Residue Glu-65 participates in thiamine diphosphate binding. Residues 437–517 form a thiamine pyrophosphate binding region; sequence SLPGDLQRMW…INIILFDNSG (81 aa). Mg(2+) contacts are provided by Asp-488 and Asn-515.

It belongs to the TPP enzyme family. It depends on Mg(2+) as a cofactor. Requires thiamine diphosphate as cofactor.

The catalysed reaction is 3D-3,5/4-trihydroxycyclohexane-1,2-dione + H2O = 5-deoxy-D-glucuronate + H(+). It functions in the pathway polyol metabolism; myo-inositol degradation into acetyl-CoA; acetyl-CoA from myo-inositol: step 3/7. Functionally, involved in the cleavage of the C1-C2 bond of 3D-(3,5/4)-trihydroxycyclohexane-1,2-dione (THcHDO) to yield 5-deoxy-glucuronate (5DG). The polypeptide is 3D-(3,5/4)-trihydroxycyclohexane-1,2-dione hydrolase (Geobacillus thermodenitrificans (strain NG80-2)).